Consider the following 953-residue polypeptide: Xylosyltransferase 1 (953 aa).

The Cytoplasmic segment spans residues 1-17 (MVAAPCARRLARRSHSA). The helical; Signal-anchor for type II membrane protein transmembrane segment at 18–38 (LLAALMVLLLHTLVVWNFSSL) threads the bilayer. Residues 39–953 (DSGAGEQRRA…GAVKPDGRLR (915 aa)) are Lumenal-facing. The span at 48–62 (AGAAAGAAEQQQPAA) shows a compositional bias: low complexity. Disordered stretches follow at residues 48-67 (AGAA…RRER) and 74-251 (LPAA…APKC). Residues 79–97 (GGPGGRAGGGGARGGGPGG) are compositionally biased toward gly residues. A compositionally biased stretch (basic and acidic residues) spans 138–154 (KVRTDSNNENSVPKDFE). The span at 156-165 (VDNSNFAPRT) shows a compositional bias: polar residues. 2 stretches are compositionally biased toward basic and acidic residues: residues 170–197 (HQPE…DKRQ) and 205–216 (GPKEVLPPREKA). Asn-219 is a glycosylation site (N-linked (GlcNAc...) asparagine). 4 cysteine pairs are disulfide-bonded: Cys-251–Cys-279, Cys-295–Cys-536, Cys-555–Cys-568, and Cys-557–Cys-566. Residues Val-327, Asp-355, and 384 to 386 (TIW) each bind UDP-alpha-D-xylose. N-linked (GlcNAc...) asparagine glycosylation is present at Asn-415. 488 to 489 (DW) contacts UDP-alpha-D-xylose. UDP-alpha-D-xylose is bound by residues Ser-569 and 592-593 (RK). Intrachain disulfides connect Cys-669/Cys-921 and Cys-914/Cys-927. Asn-771 carries N-linked (GlcNAc...) asparagine glycosylation. Positions 933 to 953 (SSFSPDPKSELGAVKPDGRLR) are disordered.

This sequence belongs to the glycosyltransferase 14 family. XylT subfamily. Monomer. The cofactor is a divalent metal cation. Contains 7 disulfide bonds. In terms of processing, N-glycosylated. Detected in brain, spleen, kidney and testis, and at low levels in skeletal muscle.

The protein resides in the golgi apparatus membrane. The catalysed reaction is UDP-alpha-D-xylose + L-seryl-[protein] = 3-O-(beta-D-xylosyl)-L-seryl-[protein] + UDP + H(+). The protein operates within glycan metabolism; chondroitin sulfate biosynthesis. It participates in glycan metabolism; heparan sulfate biosynthesis. Catalyzes the first step in the biosynthesis of chondroitin sulfate and dermatan sulfate proteoglycans, such as DCN. Transfers D-xylose from UDP-D-xylose to specific serine residues of the core protein. Required for normal maturation of chondrocytes during bone development, normal onset of ossification and normal embryonic and postnatal skeleton development, especially of the long bones. The chain is Xylosyltransferase 1 (Xylt1) from Mus musculus (Mouse).